A 210-amino-acid chain; its full sequence is Dof zinc finger protein DOF4.4 (210 aa).

A Dof-type zinc finger spans residues 24–78 (RVCPRCDSDNTKFCFYNNYSESQPRYFCKNCRRYWTHGGALRNIPVGGSCRKPKR). Positions 26, 29, 51, and 54 each coordinate Zn(2+).

Its subcellular location is the nucleus. Its function is as follows. Transcription factor that binds specifically to a 5'-AA[AG]G-3' consensus core sequence. This chain is Dof zinc finger protein DOF4.4 (DOF4.4), found in Arabidopsis thaliana (Mouse-ear cress).